Reading from the N-terminus, the 148-residue chain is Ubiquitin-conjugating enzyme E2 5B (148 aa).

In terms of domain architecture, UBC core spans 1-147 (MASKRILKEL…ARSWTQKYAM (147 aa)). Residue Cys-85 is the Glycyl thioester intermediate of the active site.

It belongs to the ubiquitin-conjugating enzyme family.

The catalysed reaction is S-ubiquitinyl-[E1 ubiquitin-activating enzyme]-L-cysteine + [E2 ubiquitin-conjugating enzyme]-L-cysteine = [E1 ubiquitin-activating enzyme]-L-cysteine + S-ubiquitinyl-[E2 ubiquitin-conjugating enzyme]-L-cysteine.. The protein operates within protein modification; protein ubiquitination. Functionally, E2 conjugating enzyme that associates with the E3 ubiquitin-protein ligase EL5 to mediate ubiquitination of target proteins. This chain is Ubiquitin-conjugating enzyme E2 5B (UBC5B), found in Oryza sativa subsp. japonica (Rice).